The sequence spans 89 residues: Small ribosomal subunit protein uS15 (89 aa).

The span at methionine 1–glutamate 10 shows a compositional bias: basic and acidic residues. The tract at residues methionine 1–threonine 22 is disordered. Over residues leucine 11–threonine 22 the composition is skewed to polar residues.

This sequence belongs to the universal ribosomal protein uS15 family. Part of the 30S ribosomal subunit. Forms a bridge to the 50S subunit in the 70S ribosome, contacting the 23S rRNA.

Its function is as follows. One of the primary rRNA binding proteins, it binds directly to 16S rRNA where it helps nucleate assembly of the platform of the 30S subunit by binding and bridging several RNA helices of the 16S rRNA. Functionally, forms an intersubunit bridge (bridge B4) with the 23S rRNA of the 50S subunit in the ribosome. The polypeptide is Small ribosomal subunit protein uS15 (Synechococcus sp. (strain RCC307)).